A 433-amino-acid polypeptide reads, in one-letter code: Coiled-coil domain-containing protein 71 (433 aa).

Ser125 carries the post-translational modification Phosphoserine. 3 disordered regions span residues 204–256, 284–310, and 325–396; these read LKVR…GCSA, QTKT…KAAV, and KAAQ…RKSQ. Composition is skewed to basic residues over residues 216 to 230 and 288 to 306; these read KAPR…KHLT and VRVR…RAKA. Residues 260-330 are a coiled coil; the sequence is KTVQAQASQT…QAKAKAAQTK (71 aa).

This chain is Coiled-coil domain-containing protein 71 (Ccdc71), found in Mus musculus (Mouse).